A 346-amino-acid chain; its full sequence is N-acetyl-gamma-glutamyl-phosphate reductase (346 aa).

Cys-149 is a catalytic residue.

Belongs to the NAGSA dehydrogenase family. Type 1 subfamily.

The protein localises to the cytoplasm. It carries out the reaction N-acetyl-L-glutamate 5-semialdehyde + phosphate + NADP(+) = N-acetyl-L-glutamyl 5-phosphate + NADPH + H(+). Its pathway is amino-acid biosynthesis; L-arginine biosynthesis; N(2)-acetyl-L-ornithine from L-glutamate: step 3/4. Functionally, catalyzes the NADPH-dependent reduction of N-acetyl-5-glutamyl phosphate to yield N-acetyl-L-glutamate 5-semialdehyde. The sequence is that of N-acetyl-gamma-glutamyl-phosphate reductase from Geotalea daltonii (strain DSM 22248 / JCM 15807 / FRC-32) (Geobacter daltonii).